The sequence spans 264 residues: Small ribosomal subunit protein uS2 (264 aa).

Positions 225–264 (GKKAREERQLAAAKDAAGDAKPEAEEAPVAAEAEEAPAAE) are disordered.

Belongs to the universal ribosomal protein uS2 family.

This is Small ribosomal subunit protein uS2 from Corynebacterium glutamicum (strain R).